The primary structure comprises 25 residues: Secapin-1 (25 aa).

An intrachain disulfide couples C9 to C20.

Expressed by the venom gland.

It localises to the secreted. Serine protease inhibitor which exhibits antifibrinolytic, antielastolytic and antimicrobial activities. Displays antimicrobial activity against bacteria and fungi. Likely functions in the innate immune response to microbial infection and possibly in the venom, as an antifibrinolytic agent. This Apis mellifera (Honeybee) protein is Secapin-1.